We begin with the raw amino-acid sequence, 138 residues long: MASSFITVPKPFLSFPIKTNAPTLPQQTLLGIRRNSFRINAVSTKWEPAKVVPQADRVLVRLEVLPEKSSGGVLLPKSAVKFERYLTGEVVSVGSEVGEVEPGKKVLFSDMSAYEVDFGTEDAKHCFCKESDLLAIVQ.

The transit peptide at 1–61 (MASSFITVPK…VPQADRVLVR (61 aa)) directs the protein to the chloroplast. The cpn-10 domain stretch occupies residues 50-137 (KVVPQADRVL…CKESDLLAIV (88 aa)).

Belongs to the GroES chaperonin family. Expressed at low levels in germinating seeds, seedlings, rosettes leaves, flowers and siliques.

It localises to the plastid. The protein resides in the chloroplast. Functionally, functions as a co-chaperone for protein folding in chloroplasts. The polypeptide is 10 kDa chaperonin 1, chloroplastic (Arabidopsis thaliana (Mouse-ear cress)).